Consider the following 146-residue polypeptide: Snaclec stejaggregin-B subunit beta-1 (146 aa).

The signal sequence occupies residues 1-23 (MGRFIFVSFGLLVVFLSLSGTGA). 3 disulfide bridges follow: Cys25/Cys36, Cys53/Cys142, and Cys119/Cys134. The C-type lectin domain occupies 32-143 (YDLYCYRVFQ…CSQTYPFVCK (112 aa)).

It belongs to the snaclec family. In terms of assembly, heteromultimer; disulfide-linked. As to expression, expressed by the venom gland.

The protein resides in the secreted. Interferes with one step of hemostasis (modulation of platelet aggregation, or coagulation cascade, for example). In Trimeresurus stejnegeri (Chinese green tree viper), this protein is Snaclec stejaggregin-B subunit beta-1.